A 157-amino-acid chain; its full sequence is 2-C-methyl-D-erythritol 2,4-cyclodiphosphate synthase (157 aa).

A divalent metal cation-binding residues include D8 and H10. 4-CDP-2-C-methyl-D-erythritol 2-phosphate is bound by residues 8-10 (DVH) and 34-35 (HS). H42 provides a ligand contact to a divalent metal cation. Residues 56 to 58 (DIG), 132 to 135 (TTNE), F139, and R142 each bind 4-CDP-2-C-methyl-D-erythritol 2-phosphate.

It belongs to the IspF family. As to quaternary structure, homotrimer. A divalent metal cation serves as cofactor.

The enzyme catalyses 4-CDP-2-C-methyl-D-erythritol 2-phosphate = 2-C-methyl-D-erythritol 2,4-cyclic diphosphate + CMP. It participates in isoprenoid biosynthesis; isopentenyl diphosphate biosynthesis via DXP pathway; isopentenyl diphosphate from 1-deoxy-D-xylulose 5-phosphate: step 4/6. Involved in the biosynthesis of isopentenyl diphosphate (IPP) and dimethylallyl diphosphate (DMAPP), two major building blocks of isoprenoid compounds. Catalyzes the conversion of 4-diphosphocytidyl-2-C-methyl-D-erythritol 2-phosphate (CDP-ME2P) to 2-C-methyl-D-erythritol 2,4-cyclodiphosphate (ME-CPP) with a corresponding release of cytidine 5-monophosphate (CMP). The chain is 2-C-methyl-D-erythritol 2,4-cyclodiphosphate synthase from Symbiobacterium thermophilum (strain DSM 24528 / JCM 14929 / IAM 14863 / T).